Here is a 437-residue protein sequence, read N- to C-terminus: MTSYMAIDGSALVPLRQKPRRKTQGFLTMSRRRISCKDLGHADCQGWLYKKKEKGSFLSNKWKKFWVILKGSSLYWYSNQMAEKADGFVNLPDFTVERASECKKKHAFKISHPQIKTFYFAAENVQEMNVWLNKLGSAVIHQESTTKDEECYSESEQEDPEIAAETPPPPHASQTQSLTAQQASSSSPSLSGTSYSFSSLENTVKTPSSFPSSLSKERQSLPDTVNSLSAAEDEGQPITFAVQVHSPVPSEAGIHKALENSFVTSESGFLNSLSSDDTSSLSSNHDHLTVPDKPAGSKIMDKEETKVSEDDEMEKLYKSLEQASLSPLGDRRPSTKKELRKSFVKRCKNPSINEKLHKIRTLNSTLKCKEHDLAMINQLLDDPKLTARKYREWKVMNTLLIQDIYQQQRASPAPDDTDDTPQELKKSPSSPSVENSI.

A PH domain is found at 41-140; the sequence is HADCQGWLYK…WLNKLGSAVI (100 aa). 2 disordered regions span residues 143–225 and 273–307; these read ESTT…PDTV and LSSD…ETKV. The span at 151–162 shows a compositional bias: acidic residues; sequence CYSESEQEDPEI. The span at 172 to 200 shows a compositional bias: low complexity; the sequence is ASQTQSLTAQQASSSSPSLSGTSYSFSSL. Positions 201–214 are enriched in polar residues; it reads ENTVKTPSSFPSSL. Low complexity predominate over residues 273–283; sequence LSSDDTSSLSS. CRAC domain stretches follow at residues 315-320 and 339-348; these read KLYKSL and LRKSFVKRCK. The interval 389–437 is required for interaction with CYTH2; it reads KYREWKVMNTLLIQDIYQQQRASPAPDDTDDTPQELKKSPSSPSVENSI. Residues 406-437 form a disordered region; the sequence is QQQRASPAPDDTDDTPQELKKSPSSPSVENSI. Ser-411 is modified (phosphoserine). The segment covering 427–437 has biased composition (polar residues); that stretch reads SPSSPSVENSI.

In terms of assembly, interacts with guanine-nucleotide exchange factors PSCD1, PSCD2, PSCD3 and PSCD4. Interacts (via C-terminus) with cytohesin-2 CYTH2.

The protein resides in the cytoplasm. Its subcellular location is the cell membrane. In terms of biological role, enhances the promotion of guanine-nucleotide exchange by PSCD2 on ARF6 in a concentration-dependent manner. In Homo sapiens (Human), this protein is Interactor protein for cytohesin exchange factors 1 (IPCEF1).